Here is a 143-residue protein sequence, read N- to C-terminus: Envelope protein A28 homolog (143 aa).

Residues 1-21 traverse the membrane as a helical; Signal-anchor for type II membrane protein segment; sequence MNTVQILVVILITTALSFLVF. Topologically, residues 22-143 are virion surface; it reads QLWYYAENYE…LLRLLMANTS (122 aa).

It belongs to the poxviridae A28 protein family. In terms of processing, contains two intramolecular disulfide bonds. They are created by the viral disulfide bond formation pathway, a poxvirus-specific pathway that operates on the cytoplasmic side of the MV membranes.

Its subcellular location is the virion membrane. Its function is as follows. Envelope protein required for virus entry into host cell and for cell-cell fusion (syncytium formation). The protein is Envelope protein A28 homolog of Amsacta (AmEPV).